A 1194-amino-acid polypeptide reads, in one-letter code: MGPRKKSAKVCVMDSEVAEEMTADEEKDYMNQLSHEVLCHIFRYLPLQDIMCMECLSRKLKEAVTLYLRVVRVVDLCAGRWWEYMPSGFTDSSFLTLLKKMPDVEQLYGLHPRYLERRRVRGQEAFSIPGVLEALQACPNLVGVETSHLELVESIWTYMPHVHILGKFRNRNGAFPIPPENKLKIPIGAKIQTLHLVGVNVPEIPCIPMLRHLYMKWVRLTKPQPFKDFLCISLRTFVMRNCAGPTNSLKYVPLVTGLASARNLEHLEMVRVPFLGGLIQHVVEDSWRSGGFRNLHTIVLGACKNALEVDLGYLIITAARRLHEVRIQPSLTKDGVFSALKMAELEFPQFETLHLGYVDEFLLQSRMANADLVKYGLADVVENPGIITDIGMKAVNEVFSCIKYLAIYNCPHLHNPYNWISDHSRWMRLVDINLVRCHALKLDSFGQFVELLPSLEFISLDQMFREPPKGCARVGLSAGTGIGVSSALVSNQNSNNDNDNNAPNNNANLHDNNHHHPDDSDDDNDFRPDLQAGEAQFAADALNEMEDMVQEDGELVAESGNGMPAHNREVLPVDADEEQAGPSGLQRVVKPTPIADHDSESDDEEDSLELQEVWAPKNGTRRYSEREEKTGDSGQSRETAVSGKGKTPLRKRCNNSHQTGQAKPFPLEESSCEKGCQVTSEQIKADMKAARDVSEKKKSKDVYPSCSSSSSSTAASTAGNASSPSTASQSPDFARTVTSSGSSEPSPPEVDVSRQCVCSPGGSEDSEAMEEGDAESSVCPRCCCLRPQESQRRTGRCSDEERPSTSRACVVNGADGTRSAFSFRTLPQGGSSGPAHDERTNGSGCGATGEDRRGSSQPESCDVQSNEDYPRRPLTRARSRLSHVPLISESEVAKTKPCHAMKRKRTADKSTSTSDPVIEDDHVQVLVLKSKNLVGVTMTNCGITDLVLKDCPKMMFIHATRCRVLKHLKVENAPIVNRFDYAQCKKLNMDQVLDQILRMPPERNRIIYLRPMQQVDTLTLEQKLFSGPYPYHICIIHEFSNPPNVRNKVRIRNWMDTIANINQELIKYEFFLEATRTEEDLKKYPKYPWGREIYTLEGVVDGAPYSMISDFPWLRSLRTAEPNSFARYDFEDDEESTIYAPRRKGQLSADICMETIGEEISEMRQMKRGIFQRVVAIFIHYCDVNGEPVEDDYI.

In terms of domain architecture, F-box spans 30 to 75; the sequence is MNQLSHEVLCHIFRYLPLQDIMCMECLSRKLKEAVTLYLRVVRVVD. The interval 59–119 is interaction with KLF7; it reads KLKEAVTLYL…LHPRYLERRR (61 aa). Short sequence motifs (nuclear export signal) lie at residues 194-201, 307-316, and 451-460; these read LHLVGVNV, LEVDLGYLII, and LLPSLEFISL. 4 disordered regions span residues 487 to 529, 577 to 776, 793 to 879, and 896 to 915; these read ALVS…FRPD, EEQA…DAES, RTGR…RARS, and KPCHAMKRKRTADKSTSTSD. Over residues 493–510 the composition is skewed to low complexity; sequence NSNNDNDNNAPNNNANLH. At Thr592 the chain carries Phosphothreonine. Ser599, Ser601, and Ser607 each carry phosphoserine. Positions 599–609 are enriched in acidic residues; the sequence is SESDDEEDSLE. Composition is skewed to basic and acidic residues over residues 622–631 and 683–701; these read RYSEREEKTG and IKADMKAARDVSEKKKSKD. Residues 705–728 show a composition bias toward low complexity; that stretch reads SCSSSSSSTAASTAGNASSPSTAS. Phosphoserine occurs at positions 742 and 746. The segment covering 764–774 has biased composition (acidic residues); it reads EDSEAMEEGDA. Residues 793–804 are compositionally biased toward basic and acidic residues; sequence RTGRCSDEERPS. The span at 855–867 shows a compositional bias: polar residues; that stretch reads SSQPESCDVQSNE. Positions 896–906 are enriched in basic residues; sequence KPCHAMKRKRT. A Nuclear localization signal motif is present at residues 902–905; it reads KRKR.

As to quaternary structure, part of the SCF (SKP1-CUL1-F-box) E3 ubiquitin-protein ligase complex SCF(FBXO38) composed of CUL1, SKP1, RBX1 and FBXO38. Interacts with KLF7. Interacts with PDCD1/PD-1. In terms of tissue distribution, expressed at high levels in embryo (developing brain, spinal cord, branchial arms and limbs). Widely expressed at low levels in adult tissues, with highest expression in testis. Expressed in postmeiotic spermatids.

It localises to the cytoplasm. Its subcellular location is the cytosol. The protein resides in the nucleus. It functions in the pathway protein modification; protein ubiquitination. Substrate recognition component of a SCF (SKP1-CUL1-F-box protein) E3 ubiquitin-protein ligase complex which mediates the ubiquitination and subsequent proteasomal degradation of PDCD1/PD-1, thereby regulating T-cells-mediated immunity. Required for anti-tumor activity of T-cells by promoting the degradation of PDCD1/PD-1; the PDCD1-mediated inhibitory pathway being exploited by tumors to attenuate anti-tumor immunity and facilitate tumor survival. May indirectly stimulate the activity of transcription factor KLF7, a regulator of neuronal differentiation, without promoting KLF7 ubiquitination. The sequence is that of F-box only protein 38 from Mus musculus (Mouse).